The following is a 1518-amino-acid chain: Putative cellulose synthase 2 (1518 aa).

The segment at 1–731 (MYGTWFTTGK…EEKLEKQSFV (731 aa)) is catalytic. Helical transmembrane passes span 24–44 (PVWV…SVRI), 71–91 (ITVF…VWRL), and 105–125 (LAVL…LSYF). The catalytic subdomain A stretch occupies residues 144 to 237 (QWPSVDVFVP…FAVIFDCDHV (94 aa)). Aspartate 186 is an active-site residue. Aspartate 233 and aspartate 235 together coordinate substrate. Residues 314–374 (EAVMGIGGFA…GQRVRWARGM (61 aa)) are catalytic subdomain B. Residue aspartate 330 is part of the active site. 5 helical membrane passes run 404 to 424 (FLFA…LFLG), 427 to 447 (IIAA…FHSV), 465 to 485 (IYET…LLQP), 514 to 534 (ILAG…VWQF), and 543 to 563 (FILN…SIAV). The 100-residue stretch at 569 to 668 (QTRNAPRVSV…ERQVVSMVFG (100 aa)) folds into the PilZ domain. The interval 732–1518 (LKPVPRSARH…IARDDLTGEL (787 aa)) is cyclic di-GMP binding domain. The interval 765–785 (APSPDQSGVTAETPFGDSNTG) is disordered. A compositionally biased stretch (polar residues) spans 768–785 (PDQSGVTAETPFGDSNTG). Residues 1481–1501 (ALYLAGLAGAGLAALGVWAWL) form a helical membrane-spanning segment.

In the N-terminal section; belongs to the glycosyltransferase 2 family. It in the C-terminal section; belongs to the AcsB/BcsB family.

The protein localises to the cell inner membrane. It catalyses the reaction [(1-&gt;4)-beta-D-glucosyl](n) + UDP-alpha-D-glucose = [(1-&gt;4)-beta-D-glucosyl](n+1) + UDP + H(+). Its pathway is glycan metabolism; bacterial cellulose biosynthesis. The polypeptide is Putative cellulose synthase 2 (bcsABII-A) (Komagataeibacter xylinus (Gluconacetobacter xylinus)).